The sequence spans 196 residues: MRTVKFKGMGIRHLDDGRFVIVPPTFLWWPAKHVILSIILANAIITTFFLLQASNILASILLCSILLSIVFAMGYIRESFALIYIHFIYCLLYIVFSFLFIPTFYYDQKICTNAAICKTVQEWLEELVTTVASRWIYAFTGTTLITHIMMTPVSLRMMKYSASCEALEKMMTDEEYVKKMKRLAIIHPERYHPASV.

This is an uncharacterized protein from Caenorhabditis elegans.